The chain runs to 220 residues: Deoxyribose-phosphate aldolase (220 aa).

Asp89 serves as the catalytic Proton donor/acceptor. Lys151 acts as the Schiff-base intermediate with acetaldehyde in catalysis. Catalysis depends on Lys180, which acts as the Proton donor/acceptor.

Belongs to the DeoC/FbaB aldolase family. DeoC type 1 subfamily.

The protein localises to the cytoplasm. It catalyses the reaction 2-deoxy-D-ribose 5-phosphate = D-glyceraldehyde 3-phosphate + acetaldehyde. It participates in carbohydrate degradation; 2-deoxy-D-ribose 1-phosphate degradation; D-glyceraldehyde 3-phosphate and acetaldehyde from 2-deoxy-alpha-D-ribose 1-phosphate: step 2/2. Catalyzes a reversible aldol reaction between acetaldehyde and D-glyceraldehyde 3-phosphate to generate 2-deoxy-D-ribose 5-phosphate. In Lactococcus lactis subsp. lactis (strain IL1403) (Streptococcus lactis), this protein is Deoxyribose-phosphate aldolase.